We begin with the raw amino-acid sequence, 210 residues long: Probable GTP-binding protein EngB (210 aa).

The EngB-type G domain occupies 25-199; that stretch reads TGIEVAFAGR…RQKLDTWFSE (175 aa). Residues 33 to 40, 60 to 64, 78 to 81, 145 to 148, and 178 to 180 contribute to the GTP site; these read GRSNAGKS, GRTQL, DLPG, TKAD, and FSS. Mg(2+) is bound by residues Ser-40 and Thr-62.

The protein belongs to the TRAFAC class TrmE-Era-EngA-EngB-Septin-like GTPase superfamily. EngB GTPase family. The cofactor is Mg(2+).

Functionally, necessary for normal cell division and for the maintenance of normal septation. This Shigella boydii serotype 4 (strain Sb227) protein is Probable GTP-binding protein EngB.